Consider the following 323-residue polypeptide: MSPAHPENWPVLVVKGGVDDELLRDFTALAAAAEESDGNPPLSEQTFVTLRAGESGTHSLLSLALYAPDEESDPATAQDLAGFAVVVEEADGTGVLELAVHPSYRNQGVADRLVATLKASRGFDGLKAWSHGNHEAAADLAAKYGYAPIRELWKMRLTASDAELPDAALPDNVSLRAFIPGQDEEAWLAANKAAFSHHPEQGNMTRQDLAARMAEDWFDPAGFLLAVDPSGRILGFHWTKVHPGHGGHPAIGEVYVVGVTPEAQGMGLGKALTVAGIKYLQDKGLHAVVLYTDADNTPAVSLYRRLGFTRWDADVMYGPKNGG.

E44 serves as a coordination point for 1D-myo-inositol 2-(L-cysteinylamino)-2-deoxy-alpha-D-glucopyranoside. Position 98 to 100 (98 to 100 (LAV)) interacts with acetyl-CoA. Positions 173–323 (VSLRAFIPGQ…DVMYGPKNGG (151 aa)) constitute an N-acetyltransferase domain. E200, K240, and E253 together coordinate 1D-myo-inositol 2-(L-cysteinylamino)-2-deoxy-alpha-D-glucopyranoside. Residues 257-259 (VGV) and 264-270 (QGMGLGK) contribute to the acetyl-CoA site. Position 291 (Y291) interacts with 1D-myo-inositol 2-(L-cysteinylamino)-2-deoxy-alpha-D-glucopyranoside.

This sequence belongs to the acetyltransferase family. MshD subfamily. As to quaternary structure, monomer.

The catalysed reaction is 1D-myo-inositol 2-(L-cysteinylamino)-2-deoxy-alpha-D-glucopyranoside + acetyl-CoA = mycothiol + CoA + H(+). In terms of biological role, catalyzes the transfer of acetyl from acetyl-CoA to desacetylmycothiol (Cys-GlcN-Ins) to form mycothiol. The chain is Mycothiol acetyltransferase from Arthrobacter sp. (strain FB24).